A 240-amino-acid polypeptide reads, in one-letter code: MGRAFEYRRAAKEKRWDKMSKVFPKLAKAITLAAKDGGSEPDTNAKLRTAILNAKAQNMPKDNIDAAIKRASSKEGNLSEITYEGKANFGVLIIMECMTDNPTRTIANLKSYFNKTQGASIVPNGSLEFMFNRKSVFECSKSEVKNLKLSLEDLEFALIDYGLEELEEVGDRIIIRGDYNSFKLLNEGFESLKLPILKAGLQRIATTPIELNDEQMELTEKLLDRIEDDDDVVALYTNIE.

This sequence belongs to the TACO1 family.

The protein localises to the cytoplasm. This is Probable transcriptional regulatory protein HPP12_0160 from Helicobacter pylori (strain P12).